We begin with the raw amino-acid sequence, 325 residues long: Transaldolase (325 aa).

Residue lysine 125 is the Schiff-base intermediate with substrate of the active site.

This sequence belongs to the transaldolase family. Type 2 subfamily.

Its subcellular location is the cytoplasm. It carries out the reaction D-sedoheptulose 7-phosphate + D-glyceraldehyde 3-phosphate = D-erythrose 4-phosphate + beta-D-fructose 6-phosphate. It functions in the pathway carbohydrate degradation; pentose phosphate pathway; D-glyceraldehyde 3-phosphate and beta-D-fructose 6-phosphate from D-ribose 5-phosphate and D-xylulose 5-phosphate (non-oxidative stage): step 2/3. In terms of biological role, transaldolase is important for the balance of metabolites in the pentose-phosphate pathway. The protein is Transaldolase of Campylobacter jejuni subsp. doylei (strain ATCC BAA-1458 / RM4099 / 269.97).